The following is a 296-amino-acid chain: NmrA-like family domain-containing protein 1 (296 aa).

NADP(+)-binding positions include Gly11–Gln16, Arg37–Arg41, Asp58–Gln59, Thr79–Phe81, Lys133, and Tyr155–Asn158.

This sequence belongs to the NmrA-type oxidoreductase family. As to quaternary structure, homodimer.

Its subcellular location is the cytoplasm. The protein resides in the perinuclear region. It localises to the nucleus. Functionally, redox sensor protein. Undergoes restructuring and subcellular redistribution in response to changes in intracellular NADPH/NADP(+) levels. The sequence is that of NmrA-like family domain-containing protein 1 (NMRAL1) from Gallus gallus (Chicken).